The sequence spans 323 residues: tRNA U34 carboxymethyltransferase (323 aa).

Residues lysine 91, tryptophan 105, lysine 110, glycine 130, 152–154, 181–182, methionine 196, tyrosine 200, and arginine 315 contribute to the carboxy-S-adenosyl-L-methionine site; these read DPT and IE.

The protein belongs to the class I-like SAM-binding methyltransferase superfamily. CmoB family. Homotetramer.

The catalysed reaction is carboxy-S-adenosyl-L-methionine + 5-hydroxyuridine(34) in tRNA = 5-carboxymethoxyuridine(34) in tRNA + S-adenosyl-L-homocysteine + H(+). Catalyzes carboxymethyl transfer from carboxy-S-adenosyl-L-methionine (Cx-SAM) to 5-hydroxyuridine (ho5U) to form 5-carboxymethoxyuridine (cmo5U) at position 34 in tRNAs. This is tRNA U34 carboxymethyltransferase from Shigella flexneri.